The following is a 574-amino-acid chain: Sulfate adenylyltransferase (574 aa).

The segment at 1–169 (MANPPHGGVL…IEAINKLNHY (169 aa)) is N-terminal. The catalytic stretch occupies residues 170-394 (DYVALRYTPA…LRESSPPRHT (225 aa)). Gln197 is a binding site for sulfate. ATP is bound by residues 197-200 (QTRN) and 291-294 (GRDH). Active-site residues include Thr198, Arg199, and Asn200. Arg199 contacts sulfate. Residue Ala295 coordinates sulfate. An ATP-binding site is contributed by Val333. The allosteric regulation domain; adenylyl-sulfate kinase-like stretch occupies residues 395 to 574 (QGFTIFLTGY…LETEGFFDRS (180 aa)). Residues 434 to 437 (DTVR), Arg451, 477 to 478 (IA), and Arg516 contribute to the 3'-phosphoadenylyl sulfate site.

This sequence in the N-terminal section; belongs to the sulfate adenylyltransferase family. In the C-terminal section; belongs to the APS kinase family. In terms of assembly, homohexamer. Dimer of trimers.

The protein localises to the cytoplasm. It carries out the reaction sulfate + ATP + H(+) = adenosine 5'-phosphosulfate + diphosphate. It participates in sulfur metabolism; hydrogen sulfide biosynthesis; sulfite from sulfate: step 1/3. Allosterically inhibited by 3'-phosphoadenosine 5'-phosphosulfate (PAPS). Its function is as follows. Catalyzes the first intracellular reaction of sulfate assimilation, forming adenosine-5'-phosphosulfate (APS) from inorganic sulfate and ATP. Plays an important role in sulfate activation as a component of the biosynthesis pathway of sulfur-containing amino acids. This Aspergillus fumigatus (strain ATCC MYA-4609 / CBS 101355 / FGSC A1100 / Af293) (Neosartorya fumigata) protein is Sulfate adenylyltransferase.